The following is a 216-amino-acid chain: MKALALLFVLSLYLLPNPAHSKFNPIRLRPAHETASSETPVLDINGDEVRAGENYYIVSAIWGAGGGGLRLVRLDSSSNECASDVIVSRSDFDNGDPITITPADPEATVVMPSTYQTFRFNIATNKLCVNNVNWGIKHDSESGQYFVKAGEFVSDNSNQFKIEVVNDNLNAYKISYCQFGTEKCFNVGRYYDPLTRATRLALSNTPFVFVIKPTDM.

Positions 1-21 (MKALALLFVLSLYLLPNPAHS) are cleaved as a signal peptide.

It belongs to the protease inhibitor I3 (leguminous Kunitz-type inhibitor) family. As to expression, accumulates specifically in tuberous roots and tubers upon tuberization. Sporamin accounts 60 to 80% of the total soluble protein of the organ.

It is found in the vacuole. Functionally, major tuberous root protein. This Ipomoea batatas (Sweet potato) protein is Sporamin B (GSPO-B1).